A 414-amino-acid polypeptide reads, in one-letter code: MLNTSTSGGSGVHVVLASSSSASVNGLKNYYIAKIQEKEIVLRDKIENLRRLQAQRNELNGRVRSLKEELQQLQEPGSHVGEVVKVMGKKKVLIKISQEGKYIVDIDKSIELKDLTPGVRVALRNDSYALHKILPNKIDPLVSLMKVEKVPDATYEMVGGLDEQIKEIKEVIELPIKHPELFESLGIAQPKGVIMYGPPGTGKTLLARAVAHHTDCTFIRVSGSELVQKYIGEGSKMVRELFVMAREHAPSIIFMDEIDSIGSTRTEGGKGGGDSEVQRTMLELLNQLDGFESTQNIKIIMATNRIDILDPALLRPGRIDRKIEFPNPNELARLDILKIHSRRMNLTRGINLRKIASMLGGASGAEIKATCTEAGMFALRERRVHVTQEDLEMAVAKVMKRGDESNMSFKKLFK.

ATP is bound at residue Gly-197 to Thr-204.

This sequence belongs to the AAA ATPase family.

It is found in the cytoplasm. The protein localises to the nucleus. Functionally, the 26S proteasome is involved in the ATP-dependent degradation of ubiquitinated proteins. The regulatory (or ATPase) complex confers ATP dependency and substrate specificity to the 26S complex. The polypeptide is 26S proteasome regulatory subunit 8 homolog (Naegleria fowleri (Brain eating amoeba)).